The sequence spans 1259 residues: uncharacterized protein (1259 aa).

The interval 354-410 (KLNQAGGKRNSSMNNSTQNNNSSRSNNSARNNNSVWNNNNSAWKNNNSAWNDNSSWK) is disordered. The segment covering 362–410 (RNSSMNNSTQNNNSSRSNNSARNNNSVWNNNNSAWKNNNSAWNDNSSWK) has biased composition (low complexity).

Its subcellular location is the virion. This is an uncharacterized protein from Acanthamoeba polyphaga (Amoeba).